Consider the following 98-residue polypeptide: Venom toxin OcyC11 (98 aa).

An N-terminal signal peptide occupies residues 1–20 (MKIACTLVLFVMLRCYVNAR).

Post-translationally, contains 4 disulfide bonds. As to expression, expressed by the venom gland.

Its subcellular location is the secreted. The sequence is that of Venom toxin OcyC11 from Opisthacanthus cayaporum (South American scorpion).